A 131-amino-acid polypeptide reads, in one-letter code: UPF0344 protein Sca_0577 (131 aa).

Helical transmembrane passes span 1-21 (MLHL…VSYI), 42-62 (LFLV…FATA), 69-89 (LLTL…VTLV), and 99-119 (GLFW…IILP).

The protein belongs to the UPF0344 family.

Its subcellular location is the cell membrane. The polypeptide is UPF0344 protein Sca_0577 (Staphylococcus carnosus (strain TM300)).